The following is a 321-amino-acid chain: Beta-ketoacyl-[acyl-carrier-protein] synthase III (321 aa).

Catalysis depends on residues Cys113 and His248. Residues 249 to 253 are ACP-binding; it reads QANAR. Asn278 is a catalytic residue.

Belongs to the thiolase-like superfamily. FabH family. In terms of assembly, homodimer.

The protein localises to the cytoplasm. The enzyme catalyses malonyl-[ACP] + acetyl-CoA + H(+) = 3-oxobutanoyl-[ACP] + CO2 + CoA. The protein operates within lipid metabolism; fatty acid biosynthesis. In terms of biological role, catalyzes the condensation reaction of fatty acid synthesis by the addition to an acyl acceptor of two carbons from malonyl-ACP. Catalyzes the first condensation reaction which initiates fatty acid synthesis and may therefore play a role in governing the total rate of fatty acid production. Possesses both acetoacetyl-ACP synthase and acetyl transacylase activities. Its substrate specificity determines the biosynthesis of branched-chain and/or straight-chain of fatty acids. In Erythrobacter litoralis (strain HTCC2594), this protein is Beta-ketoacyl-[acyl-carrier-protein] synthase III.